The primary structure comprises 433 residues: Ribosomal protein uS12 methylthiotransferase RimO (433 aa).

The 116-residue stretch at 9-124 (NKINVITLGC…LLKALGADYR (116 aa)) folds into the MTTase N-terminal domain. Cysteine 18, cysteine 53, cysteine 87, cysteine 148, cysteine 152, and cysteine 155 together coordinate [4Fe-4S] cluster. Residues 134–364 (TTPKNYAYLK…MDLQSQISWD (231 aa)) form the Radical SAM core domain. One can recognise a TRAM domain in the interval 367 to 433 (QEKLGQTFRC…TEFDLYGEPA (67 aa)).

Belongs to the methylthiotransferase family. RimO subfamily. It depends on [4Fe-4S] cluster as a cofactor.

The protein localises to the cytoplasm. It carries out the reaction L-aspartate(89)-[ribosomal protein uS12]-hydrogen + (sulfur carrier)-SH + AH2 + 2 S-adenosyl-L-methionine = 3-methylsulfanyl-L-aspartate(89)-[ribosomal protein uS12]-hydrogen + (sulfur carrier)-H + 5'-deoxyadenosine + L-methionine + A + S-adenosyl-L-homocysteine + 2 H(+). Functionally, catalyzes the methylthiolation of an aspartic acid residue of ribosomal protein uS12. In Flavobacterium psychrophilum (strain ATCC 49511 / DSM 21280 / CIP 103535 / JIP02/86), this protein is Ribosomal protein uS12 methylthiotransferase RimO.